The primary structure comprises 357 residues: SrfA-induced gene J protein (357 aa).

The disordered stretch occupies residues M1–E29. A coiled-coil region spans residues E5 to S51. Residues H17–E29 are compositionally biased toward basic and acidic residues. N114, N157, and N172 each carry an N-linked (GlcNAc...) asparagine glycan. Coiled coils occupy residues K150–I177 and D223–E270. A helical transmembrane segment spans residues I290–F307.

The protein localises to the membrane. In Dictyostelium discoideum (Social amoeba), this protein is SrfA-induced gene J protein (sigJ).